We begin with the raw amino-acid sequence, 181 residues long: Oligoribonuclease (181 aa).

Residues 8–171 form the Exonuclease domain; sequence LIWIDLEMTG…QDIQESIAEL (164 aa). Tyr129 is an active-site residue.

This sequence belongs to the oligoribonuclease family.

The protein resides in the cytoplasm. In terms of biological role, 3'-to-5' exoribonuclease specific for small oligoribonucleotides. The sequence is that of Oligoribonuclease from Shewanella baltica (strain OS155 / ATCC BAA-1091).